Consider the following 308-residue polypeptide: Oxygen-dependent coproporphyrinogen-III oxidase (308 aa).

Position 100 (Ser100) interacts with substrate. The a divalent metal cation site is built by His104 and His114. His114 (proton donor) is an active-site residue. Residue 116–118 (NFR) coordinates substrate. The a divalent metal cation site is built by His153 and His183. The segment at 248 to 283 (YVEFNLVFDRGTIFGLQSGGRTESILSSMPPMASWR) is important for dimerization. 266–268 (GGR) contacts substrate.

This sequence belongs to the aerobic coproporphyrinogen-III oxidase family. As to quaternary structure, homodimer. A divalent metal cation serves as cofactor.

It is found in the cytoplasm. It catalyses the reaction coproporphyrinogen III + O2 + 2 H(+) = protoporphyrinogen IX + 2 CO2 + 2 H2O. The protein operates within porphyrin-containing compound metabolism; protoporphyrin-IX biosynthesis; protoporphyrinogen-IX from coproporphyrinogen-III (O2 route): step 1/1. In terms of biological role, involved in the heme biosynthesis. Catalyzes the aerobic oxidative decarboxylation of propionate groups of rings A and B of coproporphyrinogen-III to yield the vinyl groups in protoporphyrinogen-IX. The chain is Oxygen-dependent coproporphyrinogen-III oxidase from Francisella tularensis subsp. novicida (strain U112).